Consider the following 217-residue polypeptide: 3,4-dihydroxy-2-butanone 4-phosphate synthase (217 aa).

D-ribulose 5-phosphate is bound by residues 37–38 (RE), D42, 150–154 (RRGHT), and E174. E38 provides a ligand contact to Mg(2+). H153 provides a ligand contact to Mg(2+).

The protein belongs to the DHBP synthase family. In terms of assembly, homodimer. The cofactor is Mg(2+). Requires Mn(2+) as cofactor.

It carries out the reaction D-ribulose 5-phosphate = (2S)-2-hydroxy-3-oxobutyl phosphate + formate + H(+). The protein operates within cofactor biosynthesis; riboflavin biosynthesis; 2-hydroxy-3-oxobutyl phosphate from D-ribulose 5-phosphate: step 1/1. Catalyzes the conversion of D-ribulose 5-phosphate to formate and 3,4-dihydroxy-2-butanone 4-phosphate. The chain is 3,4-dihydroxy-2-butanone 4-phosphate synthase from Shewanella sp. (strain W3-18-1).